Consider the following 500-residue polypeptide: NF-kappa-B inhibitor cactus (500 aa).

Residues 1–43 (MPSPTKAAEAATKATATSDCSCSAASVEQRAPSNAANPSSSLA) show a composition bias toward low complexity. Disordered stretches follow at residues 1-148 (MPSP…MRLK) and 171-212 (LNNL…APPS). Serine 45 is modified (phosphoserine; by PKC). Over residues 69–86 (NETSDSGFISGPQSSQIF) the composition is skewed to polar residues. The span at 118–130 (IIDEEEDQEEQEK) shows a compositional bias: acidic residues. Serine 144 carries the phosphoserine; by PKC modification. Over residues 171–189 (LNNLGQSSSTQITGRSKVQ) the composition is skewed to polar residues. Threonine 183 carries the phosphothreonine; by PKC modification. The span at 190 to 212 (SSTASTANANPSGSGATSSAPPS) shows a compositional bias: low complexity. ANK repeat units lie at residues 229–261 (DGDT…LLNI), 265–294 (VAQT…EPTV), 298–327 (HGNT…ATEI), 361–390 (DGER…DINA), and 395–424 (SGRT…KLNL). Phosphothreonine; by PKC occurs at positions 293 and 319. Position 395 is a phosphoserine; by PKC (serine 395).

Belongs to the NF-kappa-B inhibitor family. As to quaternary structure, phosphorylated isoform A binds to dorsal (dl); inhibits dl translocation to the nucleus and therefore from binding to DNA. In vitro, interacts with IKKbeta. Interacts with cactin and kappa-B-Ras. Activated IKKbeta phosphorylates cact. As to expression, expressed in ovary (at protein level).

It localises to the cytoplasm. Involved in the formation of the dorsoventral pattern. It inhibits nuclear translocation of the dorsal morphogen in the dorsal region of the embryo. Acts as a negative regulator of the NF-kappa-B (rel) signaling pathway. Cact is degraded by IKKbeta, this is essential for NF-kappa-B (rel) activation. This chain is NF-kappa-B inhibitor cactus (cact), found in Drosophila melanogaster (Fruit fly).